The chain runs to 210 residues: Histidine biosynthesis bifunctional protein HisIE (210 aa).

The phosphoribosyl-AMP cyclohydrolase stretch occupies residues 1–106 (MTNYKIDFSK…SCFNTEVPFS (106 aa)). The tract at residues 107–210 (VQTLAQTVQD…KGERQNIEQW (104 aa)) is phosphoribosyl-ATP pyrophosphohydrolase.

It in the N-terminal section; belongs to the PRA-CH family. In the C-terminal section; belongs to the PRA-PH family.

Its subcellular location is the cytoplasm. It carries out the reaction 1-(5-phospho-beta-D-ribosyl)-ATP + H2O = 1-(5-phospho-beta-D-ribosyl)-5'-AMP + diphosphate + H(+). The catalysed reaction is 1-(5-phospho-beta-D-ribosyl)-5'-AMP + H2O = 1-(5-phospho-beta-D-ribosyl)-5-[(5-phospho-beta-D-ribosylamino)methylideneamino]imidazole-4-carboxamide. It functions in the pathway amino-acid biosynthesis; L-histidine biosynthesis; L-histidine from 5-phospho-alpha-D-ribose 1-diphosphate: step 2/9. The protein operates within amino-acid biosynthesis; L-histidine biosynthesis; L-histidine from 5-phospho-alpha-D-ribose 1-diphosphate: step 3/9. This is Histidine biosynthesis bifunctional protein HisIE (hisI) from Staphylococcus aureus (strain COL).